The chain runs to 289 residues: 4-diphosphocytidyl-2-C-methyl-D-erythritol kinase (289 aa).

Lys13 is an active-site residue. Residue 101–111 (PMGGGLGGGSS) participates in ATP binding. Asp143 is an active-site residue.

It belongs to the GHMP kinase family. IspE subfamily.

The enzyme catalyses 4-CDP-2-C-methyl-D-erythritol + ATP = 4-CDP-2-C-methyl-D-erythritol 2-phosphate + ADP + H(+). It participates in isoprenoid biosynthesis; isopentenyl diphosphate biosynthesis via DXP pathway; isopentenyl diphosphate from 1-deoxy-D-xylulose 5-phosphate: step 3/6. Its function is as follows. Catalyzes the phosphorylation of the position 2 hydroxy group of 4-diphosphocytidyl-2C-methyl-D-erythritol. The polypeptide is 4-diphosphocytidyl-2-C-methyl-D-erythritol kinase (Janthinobacterium sp. (strain Marseille) (Minibacterium massiliensis)).